Reading from the N-terminus, the 501-residue chain is tRNA (guanine(37)-N(1))-methyltransferase (501 aa).

S-adenosyl-L-methionine-binding positions include H282, 320-321 (DL), 348-349 (DG), and N380. The interval 474–501 (LQNDQEPPLKRQKTGDPFSGEPQIASDS) is disordered.

The protein belongs to the class I-like SAM-binding methyltransferase superfamily. TRM5/TYW2 family. In terms of assembly, monomer.

The protein localises to the mitochondrion matrix. It localises to the nucleus. Its subcellular location is the cytoplasm. The enzyme catalyses guanosine(37) in tRNA + S-adenosyl-L-methionine = N(1)-methylguanosine(37) in tRNA + S-adenosyl-L-homocysteine + H(+). In terms of biological role, involved in mitochondrial tRNA methylation. Specifically methylates the N1 position of guanosine-37 in various tRNAs. Methylation is not dependent on the nature of the nucleoside 5' of the target nucleoside. This is the first step in the biosynthesis of wybutosine (yW), a modified base adjacent to the anticodon of tRNAs and required for accurate decoding. The protein is tRNA (guanine(37)-N(1))-methyltransferase (Trmt5) of Mus musculus (Mouse).